Here is a 315-residue protein sequence, read N- to C-terminus: Protoheme IX farnesyltransferase (315 aa).

9 helical membrane passes run 32–52 (VMSL…GHMN), 53–73 (PVLA…SGAL), 93–113 (IPAG…LSAF), 120–140 (LMVN…YAVI), 153–173 (IVIG…AATG), 180–200 (LVLF…LSLF), 226–246 (ALFY…MGFA), 249–269 (FYGV…WRLW), and 295–315 (IFAV…FGVF).

The protein belongs to the UbiA prenyltransferase family. Protoheme IX farnesyltransferase subfamily.

It is found in the cell inner membrane. It catalyses the reaction heme b + (2E,6E)-farnesyl diphosphate + H2O = Fe(II)-heme o + diphosphate. The protein operates within porphyrin-containing compound metabolism; heme O biosynthesis; heme O from protoheme: step 1/1. Its function is as follows. Converts heme B (protoheme IX) to heme O by substitution of the vinyl group on carbon 2 of heme B porphyrin ring with a hydroxyethyl farnesyl side group. The chain is Protoheme IX farnesyltransferase from Brucella suis (strain ATCC 23445 / NCTC 10510).